The primary structure comprises 88 residues: Putative regulatory protein AM1_5498 (88 aa).

This sequence belongs to the RemA family.

This chain is Putative regulatory protein AM1_5498, found in Acaryochloris marina (strain MBIC 11017).